The primary structure comprises 97 residues: Conotoxin Cal6.1a (97 aa).

The N-terminal stretch at M1–T22 is a signal peptide. The segment at D23 to T46 is disordered. The propeptide occupies D23–S68. Cystine bridges form between C71/C87, C78/C91, and C86/C96.

It belongs to the conotoxin O1 superfamily. Expressed by the venom duct.

The protein localises to the secreted. In terms of biological role, probable neurotoxin with unknown target. Possibly targets ion channels. The chain is Conotoxin Cal6.1a from Californiconus californicus (California cone).